We begin with the raw amino-acid sequence, 220 residues long: Protein myomaker (220 aa).

Residue Met1 is a topological domain, extracellular. The helical transmembrane segment at 2–22 (GAFIAKMLLPTISSLVFVPAA) threads the bilayer. At 23–37 (SVAAKRGFHMEAMVY) the chain is on the cytoplasmic side. Residues 38 to 58 (FFTMFFTAIYHACDGPGLSIL) traverse the membrane as a helical segment. Over 59-64 (CFMKYD) the chain is Extracellular. The helical transmembrane segment at 65-85 (ILEYFSVYGTAISMWVTLLAL) threads the bilayer. Residues 86-93 (GDFDEPKR) lie on the Cytoplasmic side of the membrane. Residues 94–110 (SSLTMFGVLTAAVRIYQ) form a helical membrane-spanning segment. Topologically, residues 111–112 (DR) are extracellular. Residues 113–133 (LGYGIYSGPIGTAVFMITVKW) form a helical membrane-spanning segment. At 134-153 (LQKMKEKKGLYPDKSVYTQQ) the chain is on the cytoplasmic side. Residues 154–174 (VGPGCCFGALALMLRFYFEEW) form a helical membrane-spanning segment. Asp175 is a topological domain (extracellular). The helical transmembrane segment at 176–196 (YAYVHSFYHVSLAMSFILLLP) threads the bilayer. At 197 to 220 (KKNRYAGTGRNAAKLNCYTLCCCV) the chain is on the cytoplasmic side.

This sequence belongs to the TMEM8 family.

Its subcellular location is the cell membrane. In terms of biological role, myoblast-specific protein that mediates myoblast fusion, an essential step for the formation of multi-nucleated muscle fibers. Actively participates in the membrane fusion reaction by mediating the mixing of cell membrane lipids (hemifusion) upstream of mymx. The protein is Protein myomaker of Danio rerio (Zebrafish).